The chain runs to 454 residues: Notoamide E oxidase notB (454 aa).

A helical membrane pass occupies residues 15–35 (SPAELTVIIVGLGIAGLTAAI). Positions 48 and 61 each coordinate FAD. A glycan (N-linked (GlcNAc...) asparagine) is linked at asparagine 75. Arginine 121 contacts FAD. Catalysis depends on residues arginine 199 and tyrosine 229. FAD is bound by residues aspartate 322 and glycine 335.

The protein belongs to the paxM FAD-dependent monooxygenase family. The cofactor is FAD.

It localises to the membrane. It catalyses the reaction notoamide E + NADPH + O2 + H(+) = notoamide C + NADP(+) + H2O. It carries out the reaction notoamide E + NADPH + O2 + H(+) = notoamide D + NADP(+) + H2O. It functions in the pathway alkaloid biosynthesis. Its function is as follows. FAD-dependent monooxygenase; part of the gene cluster that mediates the biosynthesis of notoamide, a fungal indole alkaloid that belongs to a family of natural products containing a characteristic bicyclo[2.2.2]diazaoctane core. The first step of notoamide biosynthesis involves coupling of L-proline and L-tryptophan by the bimodular NRPS notE, to produce cyclo-L-tryptophan-L-proline called brevianamide F. The reverse prenyltransferase notF then acts as a deoxybrevianamide E synthase and converts brevianamide F to deoxybrevianamide E via reverse prenylation at C-2 of the indole ring leading to the bicyclo[2.2.2]diazaoctane core. Deoxybrevianamide E is further hydroxylated at C-6 of the indole ring, likely catalyzed by the cytochrome P450 monooxygenase notG, to yield 6-hydroxy-deoxybrevianamide E. 6-hydroxy-deoxybrevianamide E is a specific substrate of the prenyltransferase notC for normal prenylation at C-7 to produce 6-hydroxy-7-prenyl-deoxybrevianamide, also called notoamide S. As the proposed pivotal branching point in notoamide biosynthesis, notoamide S can be diverted to notoamide E through an oxidative pyran ring closure putatively catalyzed by either notH cytochrome P450 monooxygenase or the notD FAD-linked oxidoreductase. This step would be followed by an indole 2,3-epoxidation-initiated pinacol-like rearrangement catalyzed by the notB FAD-dependent monooxygenase leading to the formation of notoamide C and notoamide D. On the other hand notoamide S is converted to notoamide T by notH (or notD), a bifunctional oxidase that also functions as the intramolecular Diels-Alderase responsible for generation of (+)-notoamide T. To generate antipodal (-)-notoaminide T, notH' (or notD') in Aspergillus versicolor is expected to catalyze a Diels-Alder reaction leading to the opposite stereochemistry. The remaining oxidoreductase notD (or notH) likely catalyzes the oxidative pyran ring formation to yield (+)-stephacidin A. The FAD-dependent monooxygenase notI is highly similar to notB and is predicted to catalyze a similar conversion from (+)-stephacidin A to (-)-notoamide B via the 2,3-epoxidation of (+)-stephacidin A followed by a pinacol-type rearrangement. Finally, it remains unclear which enzyme could be responsible for the final hydroxylation steps leading to notoamide A and sclerotiamide. The sequence is that of Notoamide E oxidase notB from Aspergillus sp. (strain MF297-2).